A 209-amino-acid chain; its full sequence is Small ribosomal subunit protein uS4 (209 aa).

The region spanning 99–179 (GRLDSVAYRM…FPEWIEVDAK (81 aa)) is the S4 RNA-binding domain.

Belongs to the universal ribosomal protein uS4 family. As to quaternary structure, part of the 30S ribosomal subunit. Contacts protein S5. The interaction surface between S4 and S5 is involved in control of translational fidelity.

One of the primary rRNA binding proteins, it binds directly to 16S rRNA where it nucleates assembly of the body of the 30S subunit. In terms of biological role, with S5 and S12 plays an important role in translational accuracy. This Azoarcus sp. (strain BH72) protein is Small ribosomal subunit protein uS4.